A 333-amino-acid chain; its full sequence is Ferrochelatase (333 aa).

Residues His202 and Glu284 each coordinate Fe cation.

Belongs to the ferrochelatase family.

The protein resides in the cytoplasm. It catalyses the reaction heme b + 2 H(+) = protoporphyrin IX + Fe(2+). Its pathway is porphyrin-containing compound metabolism; protoheme biosynthesis; protoheme from protoporphyrin-IX: step 1/1. Catalyzes the ferrous insertion into protoporphyrin IX. This chain is Ferrochelatase, found in Francisella tularensis subsp. novicida (strain U112).